A 498-amino-acid chain; its full sequence is 3-octaprenyl-4-hydroxybenzoate carboxy-lyase (498 aa).

Residue asparagine 175 coordinates Mn(2+). Prenylated FMN contacts are provided by residues 178-180 (IYR), 192-194 (RWL), and 197-198 (RG). Glutamate 241 contributes to the Mn(2+) binding site. Aspartate 290 serves as the catalytic Proton donor.

It belongs to the UbiD family. As to quaternary structure, homohexamer. The cofactor is prenylated FMN. Mn(2+) is required as a cofactor.

It localises to the cell membrane. It catalyses the reaction a 4-hydroxy-3-(all-trans-polyprenyl)benzoate + H(+) = a 2-(all-trans-polyprenyl)phenol + CO2. It functions in the pathway cofactor biosynthesis; ubiquinone biosynthesis. In terms of biological role, catalyzes the decarboxylation of 3-octaprenyl-4-hydroxy benzoate to 2-octaprenylphenol, an intermediate step in ubiquinone biosynthesis. The protein is 3-octaprenyl-4-hydroxybenzoate carboxy-lyase of Yersinia pestis bv. Antiqua (strain Antiqua).